Reading from the N-terminus, the 255-residue chain is MNTLTVKSVKERLQEVRDESDPFLAQCEKDPRKSVQTLLEQWLKKHAKEKALKEQWLNMTAYERLSSKKGFRLIAGVDEAGRGPLAGPVVAGAVILPAECEILGLTDSKKLSEKKLEEYYSRITEEAAAVGVGIVHADVIDRINIYEAARLAMVKAVNALTETPDYLLVDAMTLPLDIPQSSVIKGDAKSVSIAAGACIAKVTRDRLMAEYAKTYPMYGFEKNKGYGTKEHLEALQAYGPTTIHRKTFAPVQSYC.

In terms of domain architecture, RNase H type-2 spans 72-255 (RLIAGVDEAG…KTFAPVQSYC (184 aa)). Residues Asp78, Glu79, and Asp170 each coordinate a divalent metal cation.

The protein belongs to the RNase HII family. It depends on Mn(2+) as a cofactor. The cofactor is Mg(2+).

The protein resides in the cytoplasm. The catalysed reaction is Endonucleolytic cleavage to 5'-phosphomonoester.. Its function is as follows. Endonuclease that specifically degrades the RNA of RNA-DNA hybrids. The sequence is that of Ribonuclease HII from Bacillus velezensis (strain DSM 23117 / BGSC 10A6 / LMG 26770 / FZB42) (Bacillus amyloliquefaciens subsp. plantarum).